Here is a 276-residue protein sequence, read N- to C-terminus: Probable endonuclease 4 (276 aa).

The Zn(2+) site is built by His-70, His-108, Glu-144, Asp-177, His-180, His-211, Asp-224, His-226, and Glu-256.

The protein belongs to the AP endonuclease 2 family. Zn(2+) serves as cofactor.

It carries out the reaction Endonucleolytic cleavage to 5'-phosphooligonucleotide end-products.. Its function is as follows. Endonuclease IV plays a role in DNA repair. It cleaves phosphodiester bonds at apurinic or apyrimidinic (AP) sites, generating a 3'-hydroxyl group and a 5'-terminal sugar phosphate. In Metamycoplasma arthritidis (strain 158L3-1) (Mycoplasma arthritidis), this protein is Probable endonuclease 4.